The primary structure comprises 104 residues: L-rhamnose mutarotase (104 aa).

Tyr-18 is a binding site for substrate. Residue His-22 is the Proton donor of the active site. Residues Tyr-41 and 76–77 each bind substrate; that span reads WW.

It belongs to the rhamnose mutarotase family. Homodimer.

It is found in the cytoplasm. It carries out the reaction alpha-L-rhamnose = beta-L-rhamnose. It functions in the pathway carbohydrate metabolism; L-rhamnose metabolism. Functionally, involved in the anomeric conversion of L-rhamnose. The protein is L-rhamnose mutarotase of Klebsiella pneumoniae (strain 342).